The following is a 73-amino-acid chain: Large ribosomal subunit protein bL31 (73 aa).

Zn(2+)-binding residues include Cys-16, Cys-18, Cys-38, and Cys-41.

Belongs to the bacterial ribosomal protein bL31 family. Type A subfamily. As to quaternary structure, part of the 50S ribosomal subunit. Zn(2+) serves as cofactor.

Functionally, binds the 23S rRNA. The protein is Large ribosomal subunit protein bL31 of Streptomyces avermitilis (strain ATCC 31267 / DSM 46492 / JCM 5070 / NBRC 14893 / NCIMB 12804 / NRRL 8165 / MA-4680).